The following is a 205-amino-acid chain: ATP synthase subunit b (205 aa).

A helical transmembrane segment spans residues 51-69; the sequence is FAWRCLDFAVLLAIVVWAL.

It belongs to the ATPase B chain family. F-type ATPases have 2 components, F(1) - the catalytic core - and F(0) - the membrane proton channel. F(1) has five subunits: alpha(3), beta(3), gamma(1), delta(1), epsilon(1). F(0) has three main subunits: a(1), b(2) and c(10-14). The alpha and beta chains form an alternating ring which encloses part of the gamma chain. F(1) is attached to F(0) by a central stalk formed by the gamma and epsilon chains, while a peripheral stalk is formed by the delta and b chains.

Its subcellular location is the cell inner membrane. Functionally, f(1)F(0) ATP synthase produces ATP from ADP in the presence of a proton or sodium gradient. F-type ATPases consist of two structural domains, F(1) containing the extramembraneous catalytic core and F(0) containing the membrane proton channel, linked together by a central stalk and a peripheral stalk. During catalysis, ATP synthesis in the catalytic domain of F(1) is coupled via a rotary mechanism of the central stalk subunits to proton translocation. In terms of biological role, component of the F(0) channel, it forms part of the peripheral stalk, linking F(1) to F(0). This chain is ATP synthase subunit b, found in Geotalea uraniireducens (strain Rf4) (Geobacter uraniireducens).